Consider the following 260-residue polypeptide: MKKSILALSLLVGLSTAASSYAALPETVRIGTDTTYAPFSSKDAKGDFVGFDIDLGNEMCKRMQVKCTWVASDFDALIPSLKAKKIDAIISSLSITDKRQQEIAFSDKLYAADSRLIAAKGSPIQPTLDSLKGKHVGVLQGSTQEAYANETWRSKGVDVVAYANQDLVYSDLAAGRLDAALQDEVAASEGFLKQPAGKDFAFAGSSVKDKKYFGDGTGVGLRKDDAELTAAFNKALGELRQDGTYDKMAKKYFDFNVYGD.

The first 22 residues, 1–22 (MKKSILALSLLVGLSTAASSYA), serve as a signal peptide directing secretion. Residue D33 participates in L-arginine binding. D33 lines the L-lysine pocket. D33 lines the L-ornithine pocket. A disulfide bridge links C60 with C67. L-arginine-binding residues include S91, S92, S94, R99, T143, and D183. Residues S91, S92, S94, R99, T143, and D183 each coordinate L-ornithine. S92, S94, R99, and T143 together coordinate L-lysine.

The protein belongs to the bacterial solute-binding protein 3 family. In terms of assembly, the complex is composed of two ATP-binding proteins (HisP), two transmembrane proteins (HisM and HisQ) and a solute-binding protein (ArgT).

It is found in the periplasm. Its function is as follows. Part of the ABC transporter complex HisPMQ-ArgT involved in lysine/arginine/ornithine transport. Binds lysine, arginine and ornithine. Stimulates ATPase activity of HisP. The polypeptide is Lysine/arginine/ornithine-binding periplasmic protein (argT) (Escherichia coli (strain K12)).